A 356-amino-acid polypeptide reads, in one-letter code: tRNA pseudouridine synthase D (356 aa).

D84 (nucleophile) is an active-site residue. In terms of domain architecture, TRUD spans 159-302 (GVPNYYGPQR…RRGARRPIRV (144 aa)).

Belongs to the pseudouridine synthase TruD family.

It carries out the reaction uridine(13) in tRNA = pseudouridine(13) in tRNA. In terms of biological role, responsible for synthesis of pseudouridine from uracil-13 in transfer RNAs. This chain is tRNA pseudouridine synthase D, found in Thermus thermophilus (strain ATCC BAA-163 / DSM 7039 / HB27).